The following is a 176-amino-acid chain: RNA pyrophosphohydrolase (176 aa).

The 152-residue stretch at 8-159 (PYRTCVGMML…KRPVYERVVK (152 aa)) folds into the Nudix hydrolase domain. A Nudix box motif is present at residues 47 to 68 (GGVDPGEDTWAAAKRELYEETS).

This sequence belongs to the Nudix hydrolase family. RppH subfamily. Requires a divalent metal cation as cofactor.

Functionally, accelerates the degradation of transcripts by removing pyrophosphate from the 5'-end of triphosphorylated RNA, leading to a more labile monophosphorylated state that can stimulate subsequent ribonuclease cleavage. The sequence is that of RNA pyrophosphohydrolase from Rhodopseudomonas palustris (strain BisA53).